We begin with the raw amino-acid sequence, 481 residues long: F-box/LRR-repeat protein At3g03360 (481 aa).

Positions Met1–Ser28 are disordered. Residues Ala14–Ser28 are compositionally biased toward low complexity. The 49-residue stretch at Gly36–Asp84 folds into the F-box domain. 5 LRR repeats span residues Ser118 to Leu145, His196 to Phe221, Glu295 to Ala320, Ile350 to Pro375, and Arg413 to Val439.

This chain is F-box/LRR-repeat protein At3g03360, found in Arabidopsis thaliana (Mouse-ear cress).